Reading from the N-terminus, the 537-residue chain is Woronin body major protein hexA (537 aa).

Basic and acidic residues-rich tracts occupy residues 1-17 (MYSVESKFERDSRRDAQ), 59-70 (DRTSHVEREDTR), and 116-134 (DSRVPEVELSRERWKRSEN). 4 disordered regions span residues 1–20 (MYSVESKFERDSRRDAQRTA), 59–79 (DRTSHVEREDTRTSAPLPDPR), 116–200 (DSRV…KPVY), and 269–295 (PKPLETRKGDSFSRSELTVESVPSRPS). Residues 135–144 (NAKQNKNKNN) are compositionally biased toward low complexity. The segment covering 272 to 281 (LETRKGDSFS) has biased composition (basic and acidic residues).

It belongs to the eIF-5A family. Hex1 subfamily. Forms oligomers. Self-assembles into hexagonal rods. Binds directly or indirectly to the Woronin body tether lah.

The protein localises to the cell septum. The protein resides in the cytoplasm. In terms of biological role, major component of Woronin bodies, fungal-specific organelles that occlude septal pores in order to separate intact from damaged compartments. HexA binds directly or indirectly to the Woronin body tether that in turn is anchored at the rim of the septal pore. Woronin bodies are important for stress resistance and virulence. This Aspergillus fumigatus (strain ATCC MYA-4609 / CBS 101355 / FGSC A1100 / Af293) (Neosartorya fumigata) protein is Woronin body major protein hexA.